A 722-amino-acid chain; its full sequence is Polyribonucleotide nucleotidyltransferase (722 aa).

Residues Asp505 and Asp511 each coordinate Mg(2+). The KH domain maps to 572-631 (PSITTIKIHPDKIRDVIGKGGATIRGICDETGASIDLDDDGNVKIYADNAAAAQAAVNRV). An S1 motif domain is found at 641–709 (GAIYKGRVER…NRGRVKLSMK (69 aa)).

Belongs to the polyribonucleotide nucleotidyltransferase family. Component of the RNA degradosome, which is a multiprotein complex involved in RNA processing and mRNA degradation. Requires Mg(2+) as cofactor.

It localises to the cytoplasm. The enzyme catalyses RNA(n+1) + phosphate = RNA(n) + a ribonucleoside 5'-diphosphate. In terms of biological role, involved in mRNA degradation. Catalyzes the phosphorolysis of single-stranded polyribonucleotides processively in the 3'- to 5'-direction. In Marinobacter nauticus (strain ATCC 700491 / DSM 11845 / VT8) (Marinobacter aquaeolei), this protein is Polyribonucleotide nucleotidyltransferase.